The primary structure comprises 95 residues: Small ribosomal subunit protein uS17 (95 aa).

Belongs to the universal ribosomal protein uS17 family. Part of the 30S ribosomal subunit.

Its function is as follows. One of the primary rRNA binding proteins, it binds specifically to the 5'-end of 16S ribosomal RNA. This chain is Small ribosomal subunit protein uS17, found in Mycoplasmopsis synoviae (strain 53) (Mycoplasma synoviae).